A 210-amino-acid polypeptide reads, in one-letter code: SGYTLTYFPLRGRAEAMRLLLGDQGVSWTDDEVQMQDWAAGIRDLKKNAVFGQIPRFQEGDFVLYQSQTILRLLARYGLSGSNEREIAINEMMNDGVEDLRLKYYKFIFWDNEANKEKFLEELATQLGYFERILTNNAGKTFVLVGDKISYADYNLLDTLFCVLDLSPTCLSGFPLLSDYVERLGKRPKLQQYLKSEGRKRRPINGNGKQ.

A GST N-terminal domain is found at 1–82 (SGYTLTYFPL…LLARYGLSGS (82 aa)). Residues Tyr-7, Arg-13, Trp-38, Lys-46, 53-54 (QI), and 66-67 (QS) contribute to the glutathione site. The region spanning 83 to 204 (NEREIAINEM…KSEGRKRRPI (122 aa)) is the GST C-terminal domain.

The protein belongs to the GST superfamily. Pi family. As to quaternary structure, homodimer. Liver, kidney, muscle, skin, lung and ovary.

The enzyme catalyses RX + glutathione = an S-substituted glutathione + a halide anion + H(+). Functionally, conjugation of reduced glutathione to a wide number of exogenous and endogenous hydrophobic electrophiles. In Bufo bufo (European toad), this protein is Glutathione S-transferase P 2.